The sequence spans 706 residues: Envelope glycoprotein H (706 aa).

The first 18 residues, 1-18 (MQLLCVFCLVLLWEVGAA), serve as a signal peptide directing secretion. The Virion surface segment spans residues 19–682 (SLSEVKLHLD…LYEERAHVVL (664 aa)). Asparagine 60 carries N-linked (GlcNAc...) asparagine; by host glycosylation. The interval 165–229 (DKFQYTGAMT…QSGDYSLVIV (65 aa)) is interaction with gL. Cysteine 278 and cysteine 335 are disulfide-bonded. Residue asparagine 435 is glycosylated (N-linked (GlcNAc...) asparagine; by host). 2 disulfides stabilise this stretch: cysteine 454–cysteine 478 and cysteine 534–cysteine 587. 2 N-linked (GlcNAc...) asparagine; by host glycosylation sites follow: asparagine 549 and asparagine 604. Cysteine 612 and cysteine 615 are disulfide-bonded. N-linked (GlcNAc...) asparagine; by host glycosylation is present at asparagine 664. A helical membrane pass occupies residues 683-703 (AIILYFIAFALGIFLVHKIVM). At 704–706 (FFL) the chain is on the intravirion side.

Belongs to the herpesviridae glycoprotein H family. Interacts with glycoprotein L (gL); this interaction is necessary for the correct processing and cell surface expression of gH. The heterodimer gH/gL seems to interact with gB trimers during fusion. The heterodimer gH/gL interacts with host EPHA2 to facilitate virus internalization and fusion. Interacts with glycoprotein 42/BZLF2. Post-translationally, N-glycosylated, O-glycosylated, and sialylated.

Its subcellular location is the virion membrane. It is found in the host cell membrane. It localises to the host endosome membrane. In terms of biological role, the heterodimer glycoprotein H-glycoprotein L is required for the fusion of viral and plasma membranes leading to virus entry into the host cell. Following initial binding to host receptor, membrane fusion is mediated by the fusion machinery composed of gB and the heterodimer gH/gL. May also be involved in the fusion between the virion envelope and the outer nuclear membrane during virion morphogenesis. The heterodimer gH/gL targets also host EPHA2 to promote viral entry. The protein is Envelope glycoprotein H of Homo sapiens (Human).